The chain runs to 673 residues: ATP-binding cassette sub-family G member 8 (673 aa).

Residues 1–11 (MAGKAAEERGL) show a composition bias toward basic and acidic residues. The segment at 1 to 25 (MAGKAAEERGLPKGATPQDTSGLQD) is disordered. Residues 1–416 (MAGKAAEERG…ISNDFRDLPT (416 aa)) lie on the Cytoplasmic side of the membrane. The region spanning 47–313 (LEVRDLNYQV…FTAIGYPCPR (267 aa)) is the ABC transporter domain. In terms of domain architecture, ABC transmembrane type-2 spans 411–665 (FRDLPTLLIH…VLYYVSLRFI (255 aa)). Residues 417–437 (LLIHGAEACLMSMTIGFLYFG) traverse the membrane as a helical segment. Residues 438 to 447 (HGSIQLSFMD) lie on the Extracellular side of the membrane. The helical transmembrane segment at 448–468 (TAALLFMIGALIPFNVILDVI) threads the bilayer. Residues 469 to 497 (SKCYSERAMLYYELEDGLYTTGPYFFAKI) lie on the Cytoplasmic side of the membrane. The chain crosses the membrane as a helical span at residues 498 to 518 (LGELPEHCAYIIIYGMPTYWL). At 519 to 527 (ANLRPGLQP) the chain is on the extracellular side. The helical transmembrane segment at 528–548 (FLLHFLLVWLVVFCCRIMALA) threads the bilayer. The Cytoplasmic segment spans residues 549–555 (AAALLPT). A helical transmembrane segment spans residues 556-576 (FHMASFFSNALYNSFYLAGGF). Topologically, residues 577 to 639 (MINLSSLWTV…LSVMELDSYP (63 aa)) are extracellular. N-linked (GlcNAc...) asparagine glycosylation occurs at Asn-619. Residues 640–660 (LYAIYLIVIGLSGGFMVLYYV) form a helical membrane-spanning segment. Topologically, residues 661-673 (SLRFIKQKPSQDW) are cytoplasmic.

It belongs to the ABC transporter superfamily. ABCG family. Eye pigment precursor importer (TC 3.A.1.204) subfamily. Heterodimer with ABCG8. It depends on Mg(2+) as a cofactor. In terms of processing, N-glycosylated. In terms of tissue distribution, predominantly expressed in the liver. Low expression levels in the small intestine and colon. Very low levels in other tissues, including brain, heart and spleen.

The protein resides in the cell membrane. It localises to the apical cell membrane. The enzyme catalyses cholesterol(in) + ATP + H2O = cholesterol(out) + ADP + phosphate + H(+). It catalyses the reaction sitosterol(in) + ATP + H2O = sitosterol(out) + ADP + phosphate + H(+). The ATPase activity of the heterodimer is stimulated by cholate. Taurocholate, glycocholate, taurochenodeoxycholate, glycochenodeoxycholate and taurodeoxycholate also stimulate ATPase activity, but to a lower degree. Glycodeoxycholate has no significant effect on ATPase activity. ATPase activity is inhibited by vanadate and by berillium fluoride. ABCG5 and ABCG8 form an obligate heterodimer that mediates Mg(2+)- and ATP-dependent sterol transport across the cell membrane. Plays an essential role in the selective transport of the dietary cholesterol in and out of the enterocytes and in the selective sterol excretion by the liver into bile. Required for normal sterol homeostasis. The heterodimer with ABCG5 has ATPase activity. The sequence is that of ATP-binding cassette sub-family G member 8 from Homo sapiens (Human).